The following is a 187-amino-acid chain: HTH-type transcriptional repressor Rv1474c (187 aa).

Positions 10-70 (AARRRQILDG…ALAREDTERM (61 aa)) constitute an HTH tetR-type domain. The segment at residues 33 to 52 (TVRRLEQAIGMSRGAIFHHF) is a DNA-binding region (H-T-H motif).

In terms of assembly, homodimer.

Its activity is regulated as follows. Binding to DNA is abolished in the presence of high concentration of iron. Specifically binds to tetracycline, which leads to a conformational change in the structure of the protein and inhibits the DNA binding activity. In terms of biological role, represses the expression of the aconitase gene acn and its own expression, in an iron-responsive manner. Binds to the inverted repeat element present in the upstream region of acn (Rv1475c)-Rv1474c operon. Preferentially binds to major groove of the DNA. This Mycobacterium tuberculosis (strain ATCC 25618 / H37Rv) protein is HTH-type transcriptional repressor Rv1474c.